Reading from the N-terminus, the 524-residue chain is Lysine--tRNA ligase (524 aa).

A 'HIGH' region motif is present at residues 39–47 (ASGIPHMGS). The short motif at 294–298 (KISKS) is the 'KMSKS' region element. Position 297 (K297) interacts with ATP.

This sequence belongs to the class-I aminoacyl-tRNA synthetase family.

Its subcellular location is the cytoplasm. The enzyme catalyses tRNA(Lys) + L-lysine + ATP = L-lysyl-tRNA(Lys) + AMP + diphosphate. This Cenarchaeum symbiosum protein is Lysine--tRNA ligase (lysS).